The following is a 1206-amino-acid chain: STE20-like serine/threonine-protein kinase (1206 aa).

A Phosphoserine modification is found at serine 14. A Protein kinase domain is found at 34–292 (WEIIGELGDG…TSQLLQHPFV (259 aa)). ATP contacts are provided by residues 40 to 48 (LGDGAFGKV) and lysine 63. Catalysis depends on aspartate 155, which acts as the Proton acceptor. The residue at position 183 (threonine 183) is a Phosphothreonine. Serine 189 carries the post-translational modification Phosphoserine. The disordered stretch occupies residues 308 to 352 (KAEVTEEVEDGKEEDDDDETESALPIPANKRASSDLSIASSEEDK). Acidic residues predominate over residues 312–328 (TEEVEDGKEEDDDDETE). A phosphoserine mark is found at serine 340, serine 341, serine 344, serine 347, serine 348, serine 354, and serine 372. A disordered region spans residues 364 to 440 (SERTEHNTSG…ESQPDTEDQQ (77 aa)). Basic and acidic residues-rich tracts occupy residues 381–395 (LSEK…KTVD) and 420–429 (ENGREKKRPQ). The stretch at 468-492 (EEDRNEENQEIIENKLTQSEEIKDI) forms a coiled coil. Disordered stretches follow at residues 515 to 761 (DNEV…SSSD) and 773 to 792 (TKDS…KTLK). Positions 520-536 (FTKEETQEKLGKDDKTH) are enriched in basic and acidic residues. 2 positions are modified to phosphoserine: serine 545 and serine 563. Polar residues predominate over residues 556-565 (TQKSAEQSQD). Residues 584-609 (KATEGPEAHGAEEEPRSGERVEDKQL) show a composition bias toward basic and acidic residues. Residues 634–643 (EEPETDEVDQ) show a composition bias toward acidic residues. 3 positions are modified to phosphoserine: serine 645, serine 649, and serine 668. The span at 691 to 702 (AEPQAPAASQAS) shows a compositional bias: low complexity. Positions 747 to 757 (TDSGTGSTVEN) are enriched in polar residues. Residues serine 776 and serine 778 each carry the phosphoserine modification. Threonine 813 is subject to Phosphothreonine. At serine 817 the chain carries Phosphoserine. Residues 825-1037 (LRRQELRELR…LKNRQTQERA (213 aa)) are a coiled coil. The UVR domain occupies 874 to 909 (DQEIENLEKQQKQTIERLEQEHTNRLRDEAKRIKGE). Threonine 1065 carries the phosphothreonine modification. Residues 1077 to 1151 (AAQEEKRQKN…ELKEWREKLR (75 aa)) are a coiled coil. Basic and acidic residues predominate over residues 1079 to 1099 (QEEKRQKNERMAQHQKHESQM). Disordered regions lie at residues 1079–1100 (QEEK…SQMR) and 1181–1206 (LNPS…AWAG). The span at 1181–1200 (LNPSAQSRGCLQTSHPSSTR) shows a compositional bias: polar residues.

Belongs to the protein kinase superfamily. STE Ser/Thr protein kinase family. STE20 subfamily. In terms of processing, proteolytically cleaved by caspase-3. Autophosphorylated.

It is found in the cytoplasm. The enzyme catalyses L-seryl-[protein] + ATP = O-phospho-L-seryl-[protein] + ADP + H(+). The catalysed reaction is L-threonyl-[protein] + ATP = O-phospho-L-threonyl-[protein] + ADP + H(+). In terms of biological role, mediates apoptosis and actin stress fiber dissolution. The chain is STE20-like serine/threonine-protein kinase (Slk) from Rattus norvegicus (Rat).